The chain runs to 722 residues: Polyribonucleotide nucleotidyltransferase (722 aa).

Asp487 and Asp493 together coordinate Mg(2+). The 60-residue stretch at 554-613 folds into the KH domain; the sequence is PRMVSFKIHPDKIREVIGKGGATIQALTKETGCSIDIKDDGTVTIASTSAEGMAEAKARI. In terms of domain architecture, S1 motif spans 623-691; it reads GKIYEGPVVK…ERGRLRLSLK (69 aa).

This sequence belongs to the polyribonucleotide nucleotidyltransferase family. Requires Mg(2+) as cofactor.

Its subcellular location is the cytoplasm. The enzyme catalyses RNA(n+1) + phosphate = RNA(n) + a ribonucleoside 5'-diphosphate. Involved in mRNA degradation. Catalyzes the phosphorolysis of single-stranded polyribonucleotides processively in the 3'- to 5'-direction. The chain is Polyribonucleotide nucleotidyltransferase from Polynucleobacter necessarius subsp. necessarius (strain STIR1).